A 361-amino-acid chain; its full sequence is 3-isopropylmalate dehydrogenase (361 aa).

Residue 78–91 (GTQWDSLPRHLRPE) participates in NAD(+) binding. Residues Arg-98, Arg-108, Arg-136, and Asp-226 each coordinate substrate. 3 residues coordinate Mg(2+): Asp-226, Asp-250, and Asp-254. Position 284–296 (284–296 (GSAPDIAGQDKAN)) interacts with NAD(+).

It belongs to the isocitrate and isopropylmalate dehydrogenases family. LeuB type 1 subfamily. As to quaternary structure, homodimer. Requires Mg(2+) as cofactor. It depends on Mn(2+) as a cofactor.

The protein resides in the cytoplasm. It catalyses the reaction (2R,3S)-3-isopropylmalate + NAD(+) = 4-methyl-2-oxopentanoate + CO2 + NADH. The protein operates within amino-acid biosynthesis; L-leucine biosynthesis; L-leucine from 3-methyl-2-oxobutanoate: step 3/4. In terms of biological role, catalyzes the oxidation of 3-carboxy-2-hydroxy-4-methylpentanoate (3-isopropylmalate) to 3-carboxy-4-methyl-2-oxopentanoate. The product decarboxylates to 4-methyl-2 oxopentanoate. This Thermosynechococcus vestitus (strain NIES-2133 / IAM M-273 / BP-1) protein is 3-isopropylmalate dehydrogenase.